The primary structure comprises 548 residues: Rhodopsin kinase grk7-b (548 aa).

Ser33 is modified (phosphoserine; by PKA). Positions 53–172 (FEDICEQQPI…QTSLFFDRFV (120 aa)) constitute an RGS domain. Residues 187 to 446 (FYEFRTLGKG…NDDPRKHEFF (260 aa)) enclose the Protein kinase domain. ATP contacts are provided by residues 193-201 (LGKGGFGEV) and Lys216. Asp312 acts as the Proton acceptor in catalysis. An AGC-kinase C-terminal domain is found at 447-512 (KSINFPRLEA…GVVPIAWQQE (66 aa)). A disordered region spans residues 520–548 (DELSDPNRKESAAGLEDEEQQKSKSCTLL). Cysteine methyl ester is present on Cys545. A lipid anchor (S-geranylgeranyl cysteine) is attached at Cys545. Positions 546 to 548 (TLL) are cleaved as a propeptide — removed in mature form.

This sequence belongs to the protein kinase superfamily. AGC Ser/Thr protein kinase family. GPRK subfamily. Post-translationally, phosphorylation at Ser-33 is regulated by light and activated by cAMP. In terms of tissue distribution, expressed in the eyes (at protein level). Expressed in the eyes, the pineal gland and in the brain.

It is found in the membrane. The catalysed reaction is L-threonyl-[rhodopsin] + ATP = O-phospho-L-threonyl-[rhodopsin] + ADP + H(+). The enzyme catalyses L-seryl-[rhodopsin] + ATP = O-phospho-L-seryl-[rhodopsin] + ADP + H(+). Its function is as follows. Retina-specific kinase involved in the shutoff of the photoresponse and adaptation to changing light conditions via cone opsin phosphorylation, including rhodopsin (RHO). The sequence is that of Rhodopsin kinase grk7-b (grk7b) from Danio rerio (Zebrafish).